The chain runs to 117 residues: uncharacterized protein (117 aa).

Residues 1-19 (MTSNPSSSADQPLSGTTVP) show a composition bias toward polar residues. The tract at residues 1–28 (MTSNPSSSADQPLSGTTVPGSVPGKAPE) is disordered. 2 consecutive transmembrane segments (helical) span residues 38–58 (AAVW…LIFI) and 76–96 (LPLG…TVFA).

The protein resides in the cell membrane. This is an uncharacterized protein from Mycobacterium tuberculosis (strain ATCC 25618 / H37Rv).